Reading from the N-terminus, the 325-residue chain is uncharacterized protein (325 aa).

Residues 1-32 (MKQEYIPLDEFPNKSNEGMLNDEGTSSSGLST) form a disordered region. Residues 23–32 (EGTSSSGLST) show a composition bias toward low complexity. A coiled-coil region spans residues 135-223 (AEEISNLKTS…LKKREDLLRL (89 aa)).

The protein resides in the cytoplasm. Its subcellular location is the cytoskeleton. It is found in the microtubule organizing center. It localises to the spindle pole body. This is an uncharacterized protein from Schizosaccharomyces pombe (strain 972 / ATCC 24843) (Fission yeast).